The chain runs to 415 residues: Probable beta-1,4-xylosyltransferase IRX10L (415 aa).

M1 is a topological domain (cytoplasmic). A helical; Signal-anchor for type II membrane protein membrane pass occupies residues K2–F22. Residues R23 to W415 are Lumenal-facing. N-linked (GlcNAc...) asparagine glycosylation is found at N142 and N403.

It belongs to the glycosyltransferase 47 family. As to expression, present in the xylem and phloem, and, to a lower extent, in interfascicular cells. Expressed in the root tip, shoot apical meristem (SAM), xylem cells of roots and stems, and in the vasculature of roots, cotyledons and leaves.

The protein localises to the golgi apparatus membrane. Involved in the synthesis of the hemicellulose glucuronoxylan, a major component of secondary cell walls. Probably involved in the elongation of glucuronoxylan xylosyl backbone. The sequence is that of Probable beta-1,4-xylosyltransferase IRX10L (IRX10L) from Arabidopsis thaliana (Mouse-ear cress).